The chain runs to 253 residues: Phosphate import ATP-binding protein PstB (253 aa).

Residues 1–249 (MKLMDVRVSG…PRHELTKKFL (249 aa)) enclose the ABC transporter domain. Residue 38 to 45 (GPSGSGKS) participates in ATP binding.

The protein belongs to the ABC transporter superfamily. Phosphate importer (TC 3.A.1.7) family. As to quaternary structure, the complex is composed of two ATP-binding proteins (PstB), two transmembrane proteins (PstC and PstA) and a solute-binding protein (PstS).

It is found in the cell membrane. It carries out the reaction phosphate(out) + ATP + H2O = ADP + 2 phosphate(in) + H(+). Part of the ABC transporter complex PstSACB involved in phosphate import. Responsible for energy coupling to the transport system. This Aeropyrum pernix (strain ATCC 700893 / DSM 11879 / JCM 9820 / NBRC 100138 / K1) protein is Phosphate import ATP-binding protein PstB.